Reading from the N-terminus, the 208-residue chain is 3-demethoxyubiquinol 3-hydroxylase (208 aa).

The Fe cation site is built by Glu57, Glu87, His90, Glu139, Glu171, and His174.

Belongs to the COQ7 family. Fe cation serves as cofactor.

Its subcellular location is the cell membrane. The catalysed reaction is a 5-methoxy-2-methyl-3-(all-trans-polyprenyl)benzene-1,4-diol + AH2 + O2 = a 3-demethylubiquinol + A + H2O. It participates in cofactor biosynthesis; ubiquinone biosynthesis. Its function is as follows. Catalyzes the hydroxylation of 2-nonaprenyl-3-methyl-6-methoxy-1,4-benzoquinol during ubiquinone biosynthesis. This is 3-demethoxyubiquinol 3-hydroxylase from Verminephrobacter eiseniae (strain EF01-2).